A 380-amino-acid chain; its full sequence is Tryptophan 2,3-dioxygenase (380 aa).

Residues 57–61 (FIITH) and Arg128 each bind substrate. His313 contributes to the heme binding site. Thr328 serves as a coordination point for substrate.

This sequence belongs to the tryptophan 2,3-dioxygenase family. In terms of assembly, homotetramer. Dimer of dimers. Requires heme as cofactor.

It catalyses the reaction L-tryptophan + O2 = N-formyl-L-kynurenine. It participates in amino-acid degradation; L-tryptophan degradation via kynurenine pathway; L-kynurenine from L-tryptophan: step 1/2. It functions in the pathway pigment biosynthesis; ommochrome biosynthesis. Heme-dependent dioxygenase that catalyzes the oxidative cleavage of the L-tryptophan (L-Trp) pyrrole ring and converts L-tryptophan to N-formyl-L-kynurenine. Catalyzes the oxidative cleavage of the indole moiety. The sequence is that of Tryptophan 2,3-dioxygenase from Drosophila virilis (Fruit fly).